Here is an 881-residue protein sequence, read N- to C-terminus: Alanine--tRNA ligase (881 aa).

4 residues coordinate Zn(2+): His-564, His-568, Cys-666, and His-670.

It belongs to the class-II aminoacyl-tRNA synthetase family. Zn(2+) is required as a cofactor.

The protein resides in the cytoplasm. It catalyses the reaction tRNA(Ala) + L-alanine + ATP = L-alanyl-tRNA(Ala) + AMP + diphosphate. Functionally, catalyzes the attachment of alanine to tRNA(Ala) in a two-step reaction: alanine is first activated by ATP to form Ala-AMP and then transferred to the acceptor end of tRNA(Ala). Also edits incorrectly charged Ser-tRNA(Ala) and Gly-tRNA(Ala) via its editing domain. The protein is Alanine--tRNA ligase of Caldicellulosiruptor saccharolyticus (strain ATCC 43494 / DSM 8903 / Tp8T 6331).